The following is an 879-amino-acid chain: DNA replication licensing factor mcm3 (879 aa).

The region spanning 306 to 513 (VFELLSTSLA…KDRALSEHVL (208 aa)) is the MCM domain. ATP is bound at residue 356–363 (GDPSTAKS). The Arginine finger signature appears at 488-491 (SRFD). Residues 679 to 778 (RKKHKKQRLE…STLPATSREL (100 aa)) are disordered. A compositionally biased stretch (acidic residues) spans 690-713 (GEEFDSEDDNSDDMDIEESEEEMD). The span at 732-752 (TSQSQESGSEIGSSIAGTAGS) shows a compositional bias: low complexity. Residues 754–778 (NVGTSNTQLSWPSTHSTLPATSREL) show a composition bias toward polar residues.

The protein belongs to the MCM family. In terms of assembly, component of the mcm2-7 complex. The complex forms a toroidal hexameric ring with the proposed subunit order mcm2-mcm6-mcm4-mcm7-mcm3-mcm5. The heterodimers of mcm4/mcm6 and mcm3/mcm5 interact with mcm2 and mcm7.

It is found in the nucleus. The enzyme catalyses ATP + H2O = ADP + phosphate + H(+). In terms of biological role, acts as a component of the mcm2-7 complex (mcm complex) which is the putative replicative helicase essential for 'once per cell cycle' DNA replication initiation and elongation in eukaryotic cells. The active ATPase sites in the mcm2-7 ring are formed through the interaction surfaces of two neighboring subunits such that a critical structure of a conserved arginine finger motif is provided in trans relative to the ATP-binding site of the Walker A box of the adjacent subunit. The six ATPase active sites, however, are likely to contribute differentially to the complex helicase activity. In Schizosaccharomyces pombe (strain 972 / ATCC 24843) (Fission yeast), this protein is DNA replication licensing factor mcm3 (mcm3).